A 223-amino-acid polypeptide reads, in one-letter code: Large ribosomal subunit protein bL25 (223 aa).

It belongs to the bacterial ribosomal protein bL25 family. CTC subfamily. In terms of assembly, part of the 50S ribosomal subunit; part of the 5S rRNA/L5/L18/L25 subcomplex. Contacts the 5S rRNA. Binds to the 5S rRNA independently of L5 and L18.

In terms of biological role, this is one of the proteins that binds to the 5S RNA in the ribosome where it forms part of the central protuberance. The chain is Large ribosomal subunit protein bL25 from Albidiferax ferrireducens (strain ATCC BAA-621 / DSM 15236 / T118) (Rhodoferax ferrireducens).